Reading from the N-terminus, the 732-residue chain is Probable boron transporter 3 (732 aa).

Met-1 is modified (N-acetylmethionine). The Cytoplasmic portion of the chain corresponds to 1–37 (MDEAESFVPFQGIKKDVKGRLNCYKQDWISGLRAGFR). Residues 38–58 (ILAPTTYIFFASAIPVITFGE) form a helical membrane-spanning segment. The Extracellular segment spans residues 59–77 (QLERDTDGKITAVQTLVST). Residues 78 to 98 (ALCGVIHSIIGGQPLLILGVA) form a helical membrane-spanning segment. The Cytoplasmic segment spans residues 99–123 (EPTVIMYTFMFNFAKSRTDLGSNLF). Residues 124–144 (LAWTGWVCLWTGLLLFLLAVL) form a helical membrane-spanning segment. The Extracellular portion of the chain corresponds to 145–157 (GACTFINRFTRLA). The chain crosses the membrane as a helical span at residues 158 to 178 (GELFGILIAMLFMQEAIRGIV). Topologically, residues 179-197 (DEFGVPGRTNPRSAEFQPA) are cytoplasmic. The helical transmembrane segment at 198 to 218 (WVFANGMFGLVLSSGLLYTGL) threads the bilayer. The Extracellular portion of the chain corresponds to 219–234 (KSRKARSWRFGAEWLR). A helical membrane pass occupies residues 235-255 (GFIADYGVPVMVVVWTCISYI). The Cytoplasmic segment spans residues 256–291 (PWKSVPQGIPRRLVSPNPWSPGAYQNWTVIKEMVDV). The helical transmembrane segment at 292–312 (PVLYILLAVVPASMIAVLYYF) threads the bilayer. The Extracellular segment spans residues 313 to 339 (DHSVASQLAQQEDFNLRKPPAYHYDLF). Residues 340-360 (LLGFLTILCGLIGIPPSNGVI) traverse the membrane as a helical segment. The Cytoplasmic portion of the chain corresponds to 361-463 (PQSPMHTKSL…ILPVEVKEQR (103 aa)). The helical transmembrane segment at 464 to 484 (VSNFLQAMMVAGCVAAMPLIK) threads the bilayer. The Extracellular segment spans residues 485-556 (RIPSSVLWGY…LFQTAYLLVC (72 aa)). Residues 557 to 577 (FGITWVPVAGVLFPLMIMFLV) traverse the membrane as a helical segment. At 578-732 (PVRQYVLPNF…QRLSNLGKSV (155 aa)) the chain is on the cytoplasmic side. The tract at residues 695–732 (GGGEISPRSSAGRAPFSPRSATGGGGGEQRLSNLGKSV) is disordered.

The protein belongs to the anion exchanger (TC 2.A.31.3) family.

It is found in the membrane. In terms of biological role, probable boron transporter. Boron is essential for maintaining the integrity of plants cell walls. This Arabidopsis thaliana (Mouse-ear cress) protein is Probable boron transporter 3 (BOR3).